The primary structure comprises 372 residues: GPN-loop GTPase 1 (372 aa).

Alanine 2 carries the N-acetylalanine modification. Position 29 to 34 (29 to 34) interacts with GTP; the sequence is GSGKTT. Positions 86-88 match the Gly-Pro-Asn (GPN)-loop; involved in dimer interface motif; it reads GPN. Position 189–192 (189–192) interacts with GTP; it reads NKTD. A phosphoserine mark is found at serine 301 and serine 314. The disordered stretch occupies residues 303 to 372; the sequence is ALDPEAGKGN…ESMAHWKRNK (70 aa). Threonine 328 carries the post-translational modification Phosphothreonine. The span at 330–342 shows a compositional bias: acidic residues; that stretch reads DEEDEEADSDTDD. Serine 338 is modified (phosphoserine). Threonine 340 carries the post-translational modification Phosphothreonine. Residues 343 to 355 are compositionally biased toward basic and acidic residues; it reads IDHRVTEESREEP.

Belongs to the GPN-loop GTPase family. In terms of assembly, heterodimer with GPN3. Binds to RNA polymerase II (RNAPII). Interacts directly with RNAPII subunits RPB4 and RPB7 and the CTD of RPB1. Interacts with XPA.

The protein localises to the cytoplasm. The protein resides in the nucleus. Functionally, small GTPase required for proper nuclear import of RNA polymerase II (RNAPII). May act at an RNAP assembly step prior to nuclear import. Forms an interface between the RNA polymerase II enzyme and chaperone/scaffolding proteins, suggesting that it is required to connect RNA polymerase II to regulators of protein complex formation. May be involved in nuclear localization of XPA. The polypeptide is GPN-loop GTPase 1 (Mus musculus (Mouse)).